The sequence spans 361 residues: Tetraacyldisaccharide 4'-kinase (361 aa).

T49–T56 lines the ATP pocket.

The protein belongs to the LpxK family.

It catalyses the reaction a lipid A disaccharide + ATP = a lipid IVA + ADP + H(+). Its pathway is glycolipid biosynthesis; lipid IV(A) biosynthesis; lipid IV(A) from (3R)-3-hydroxytetradecanoyl-[acyl-carrier-protein] and UDP-N-acetyl-alpha-D-glucosamine: step 6/6. In terms of biological role, transfers the gamma-phosphate of ATP to the 4'-position of a tetraacyldisaccharide 1-phosphate intermediate (termed DS-1-P) to form tetraacyldisaccharide 1,4'-bis-phosphate (lipid IVA). In Chlorobaculum parvum (strain DSM 263 / NCIMB 8327) (Chlorobium vibrioforme subsp. thiosulfatophilum), this protein is Tetraacyldisaccharide 4'-kinase.